A 433-amino-acid chain; its full sequence is Acetyl-CoA-benzylalcohol acetyltransferase (433 aa).

Residues H152 and D377 each act as proton acceptor in the active site.

The protein belongs to the plant acyltransferase family. The N-terminus is blocked. In terms of tissue distribution, expressed in petals, style, sepals and stamens. Very low expression in stigma and not detected in leaves.

The catalysed reaction is benzyl alcohol + acetyl-CoA = benzyl acetate + CoA. The enzyme catalyses (E)-cinnamyl alcohol + acetyl-CoA = (E)-cinnamyl acetate + CoA. In terms of biological role, involved in the biosynthesis of benzyl acetate, a major constituent of the floral scent. Can use benzylalcohol, cinnamylalcohol, 3-cis-hexene-1-ol or heptanol as substrates. Has some activity with 2-phenylethanol and 2-naphtalene-ethanol, but no activity with linalool, 2-hydroxybenzylalcohol, 3-hydroxybenzylalcohol or 4-hydroxybenzylalcohol. The polypeptide is Acetyl-CoA-benzylalcohol acetyltransferase (BEAT) (Clarkia breweri (Fairy fans)).